The following is a 330-amino-acid chain: tRNA-modifying protein YgfZ (330 aa).

Folate contacts are provided by Trp28 and Trp190.

Belongs to the tRNA-modifying YgfZ family.

The protein resides in the cytoplasm. In terms of biological role, folate-binding protein involved in regulating the level of ATP-DnaA and in the modification of some tRNAs. It is probably a key factor in regulatory networks that act via tRNA modification, such as initiation of chromosomal replication. The protein is tRNA-modifying protein YgfZ of Yersinia pestis bv. Antiqua (strain Antiqua).